A 253-amino-acid polypeptide reads, in one-letter code: Probable transcriptional regulatory protein Tery_2125 (253 aa).

Belongs to the TACO1 family.

The protein resides in the cytoplasm. The protein is Probable transcriptional regulatory protein Tery_2125 of Trichodesmium erythraeum (strain IMS101).